The following is a 285-amino-acid chain: 2,3,4,5-tetrahydropyridine-2,6-dicarboxylate N-succinyltransferase (285 aa).

Residues Arg111 and Asp148 each contribute to the substrate site.

Belongs to the transferase hexapeptide repeat family. In terms of assembly, homotrimer.

It is found in the cytoplasm. The enzyme catalyses (S)-2,3,4,5-tetrahydrodipicolinate + succinyl-CoA + H2O = (S)-2-succinylamino-6-oxoheptanedioate + CoA. Its pathway is amino-acid biosynthesis; L-lysine biosynthesis via DAP pathway; LL-2,6-diaminopimelate from (S)-tetrahydrodipicolinate (succinylase route): step 1/3. The chain is 2,3,4,5-tetrahydropyridine-2,6-dicarboxylate N-succinyltransferase from Sinorhizobium fredii (strain NBRC 101917 / NGR234).